The sequence spans 711 residues: Methionine--tRNA ligase (711 aa).

The 'HIGH' region signature appears at 15-25; sequence PYTNGPIHIGH. Positions 147, 150, 160, and 163 each coordinate Zn(2+). The 'KMSKS' region motif lies at 336–340; sequence KLSTS. Residue threonine 339 coordinates ATP. The tRNA-binding domain maps to 610–711; that stretch reads DFAKMDIRIG…ADAPNGATVN (102 aa).

The protein belongs to the class-I aminoacyl-tRNA synthetase family. MetG type 1 subfamily. Homodimer. It depends on Zn(2+) as a cofactor.

It localises to the cytoplasm. The enzyme catalyses tRNA(Met) + L-methionine + ATP = L-methionyl-tRNA(Met) + AMP + diphosphate. In terms of biological role, is required not only for elongation of protein synthesis but also for the initiation of all mRNA translation through initiator tRNA(fMet) aminoacylation. The polypeptide is Methionine--tRNA ligase (Flavobacterium johnsoniae (strain ATCC 17061 / DSM 2064 / JCM 8514 / BCRC 14874 / CCUG 350202 / NBRC 14942 / NCIMB 11054 / UW101) (Cytophaga johnsonae)).